The chain runs to 533 residues: Calcineurin-interacting protein 3 (533 aa).

Disordered regions lie at residues 1-30 (MRSLKRENSGSALSVRSSDSEGDSYHNMDI), 53-85 (PRKQRSCHKRAEPVSEEHRKKESSKNSREYTKR), and 359-404 (MDMS…LTLP). Residues 61–85 (KRAEPVSEEHRKKESSKNSREYTKR) show a composition bias toward basic and acidic residues. The segment covering 359–372 (MDMSQTLSPEQTLS) has biased composition (polar residues). Residues 373-384 (PREKLQVQDRKI) show a composition bias toward basic and acidic residues.

The protein resides in the nucleus. The chain is Calcineurin-interacting protein 3 from Caenorhabditis elegans.